Consider the following 174-residue polypeptide: Adenine phosphoribosyltransferase (174 aa).

It belongs to the purine/pyrimidine phosphoribosyltransferase family. Homodimer.

Its subcellular location is the cytoplasm. The enzyme catalyses AMP + diphosphate = 5-phospho-alpha-D-ribose 1-diphosphate + adenine. It functions in the pathway purine metabolism; AMP biosynthesis via salvage pathway; AMP from adenine: step 1/1. Its function is as follows. Catalyzes a salvage reaction resulting in the formation of AMP, that is energically less costly than de novo synthesis. This Agathobacter rectalis (strain ATCC 33656 / DSM 3377 / JCM 17463 / KCTC 5835 / VPI 0990) (Eubacterium rectale) protein is Adenine phosphoribosyltransferase.